The primary structure comprises 167 residues: Ribonuclease H (167 aa).

An RNase H type-1 domain is found at 1–143 (MYKQIEIFTD…CDQLARKAAK (143 aa)). Mg(2+) contacts are provided by aspartate 10, glutamate 48, aspartate 70, and aspartate 135.

This sequence belongs to the RNase H family. As to quaternary structure, monomer. Mg(2+) is required as a cofactor.

It localises to the cytoplasm. It carries out the reaction Endonucleolytic cleavage to 5'-phosphomonoester.. Functionally, endonuclease that specifically degrades the RNA of RNA-DNA hybrids. The polypeptide is Ribonuclease H (Blochmanniella floridana).